The chain runs to 316 residues: MNNVLKNAGLFLRLFWLRFQQNKLSQAAGYLTYSTMLALVPLVMVVFSVFSAFPVFNEVTDELKGFIFNNFAPQASDMVGQYIDEFVSNSKQMSAVGVISLVVVALMLINSIDRTLNSIWHDTTIRPLVFSFAIYWLILTLGPLLIGASIGVSSYIAAMLNENISLPFGLKILSFVPFFLTWLIFTLIYTVVPNKKVKIMHSAIGALVAAVFFTLGKQAFLWYVTTFPSYQLIYGAMATLPIMLLWIQLSWVVILIGAQLASVLADYTLCTQGKIRVEELVAADTHEPALQQKMEKTEQTLKTEITQQKQRLEKQG.

6 helical membrane passes run 36 to 56 (MLALVPLVMVVFSVFSAFPVF), 92 to 112 (QMSAVGVISLVVVALMLINSI), 128 to 148 (LVFSFAIYWLILTLGPLLIGA), 172 to 192 (ILSFVPFFLTWLIFTLIYTVV), 204 to 224 (IGALVAAVFFTLGKQAFLWYV), and 236 to 256 (AMATLPIMLLWIQLSWVVILI).

Belongs to the UPF0761 family.

The protein resides in the cell inner membrane. The chain is UPF0761 membrane protein PM1616 from Pasteurella multocida (strain Pm70).